The chain runs to 334 residues: Protein-methionine-sulfoxide reductase catalytic subunit MsrP (334 aa).

Positions Met1–Ala44 form a signal peptide, tat-type signal. Mo-molybdopterin is bound by residues Asn88, Tyr91–Glu92, Cys146, Thr181, Asn233, Arg238, and Gly249–Lys251.

Belongs to the MsrP family. Heterodimer of a catalytic subunit (MsrP) and a heme-binding subunit (MsrQ). The cofactor is Mo-molybdopterin. In terms of processing, predicted to be exported by the Tat system. The position of the signal peptide cleavage has not been experimentally proven.

It localises to the periplasm. The catalysed reaction is L-methionyl-[protein] + a quinone + H2O = L-methionyl-(S)-S-oxide-[protein] + a quinol. The enzyme catalyses L-methionyl-[protein] + a quinone + H2O = L-methionyl-(R)-S-oxide-[protein] + a quinol. Functionally, part of the MsrPQ system that repairs oxidized periplasmic proteins containing methionine sulfoxide residues (Met-O), using respiratory chain electrons. Thus protects these proteins from oxidative-stress damage caused by reactive species of oxygen and chlorine generated by the host defense mechanisms. MsrPQ is essential for the maintenance of envelope integrity under bleach stress, rescuing a wide series of structurally unrelated periplasmic proteins from methionine oxidation, including the primary periplasmic chaperone SurA and the lipoprotein Pal. The catalytic subunit MsrP is non-stereospecific, being able to reduce both (R-) and (S-) diastereoisomers of methionine sulfoxide. The protein is Protein-methionine-sulfoxide reductase catalytic subunit MsrP of Shigella boydii serotype 18 (strain CDC 3083-94 / BS512).